The primary structure comprises 222 residues: Large ribosomal subunit protein uL1 (222 aa).

Belongs to the universal ribosomal protein uL1 family. In terms of assembly, part of the 50S ribosomal subunit.

Functionally, binds directly to 23S rRNA. Probably involved in E site tRNA release. Protein L1 is also a translational repressor protein, it controls the translation of its operon by binding to its mRNA. This chain is Large ribosomal subunit protein uL1, found in Pyrobaculum aerophilum (strain ATCC 51768 / DSM 7523 / JCM 9630 / CIP 104966 / NBRC 100827 / IM2).